The chain runs to 235 residues: MLTRKQYELLMFIDERLRATGISPSFDEMKDALDLKSKSGIHRLITGLEERGFIRRLAHRARALEVVRLPENRNDQTLPPPAKAFAPNVIKGGFAASQLAGAPVAGPSDSVTLPLYGKIAAGTPIEALRDHSNSVDIPASMLGSGNHYALTVDGDSMIEAGINDGDTVVIRSCDSAETGTIVVALVDDTEVTLKRLRRKGTSVALEPANKAYETRVLPPDRVKVQGRLVGLLRRY.

A DNA-binding region (H-T-H motif) is located at residues 26–46; it reads FDEMKDALDLKSKSGIHRLIT. Active-site for autocatalytic cleavage activity residues include Ser156 and Lys194.

It belongs to the peptidase S24 family. In terms of assembly, homodimer.

It carries out the reaction Hydrolysis of Ala-|-Gly bond in repressor LexA.. In terms of biological role, represses a number of genes involved in the response to DNA damage (SOS response), including recA and lexA. In the presence of single-stranded DNA, RecA interacts with LexA causing an autocatalytic cleavage which disrupts the DNA-binding part of LexA, leading to derepression of the SOS regulon and eventually DNA repair. The sequence is that of LexA repressor from Paramagnetospirillum magneticum (strain ATCC 700264 / AMB-1) (Magnetospirillum magneticum).